The sequence spans 469 residues: Cysteine--tRNA ligase (469 aa).

C33 contributes to the Zn(2+) binding site. Positions 35–45 (ATVQGLPHIGH) match the 'HIGH' region motif. Residues C211, H236, and E240 each contribute to the Zn(2+) site. A 'KMSKS' region motif is present at residues 267–271 (KMSKS). K270 contacts ATP.

Belongs to the class-I aminoacyl-tRNA synthetase family. As to quaternary structure, monomer. Zn(2+) is required as a cofactor.

It is found in the cytoplasm. The enzyme catalyses tRNA(Cys) + L-cysteine + ATP = L-cysteinyl-tRNA(Cys) + AMP + diphosphate. This is Cysteine--tRNA ligase (cysS) from Mycobacterium tuberculosis (strain CDC 1551 / Oshkosh).